The following is a 345-amino-acid chain: Dihydroorotate dehydrogenase (quinone) (345 aa).

Residues 65–69 (AGLDK) and Thr-89 contribute to the FMN site. A substrate-binding site is contributed by Lys-69. Residue 114–118 (NRMGF) coordinates substrate. Asn-146 and Asn-179 together coordinate FMN. Asn-179 contacts substrate. The Nucleophile role is filled by Ser-182. Residue Asn-184 coordinates substrate. Residues Lys-224 and Thr-252 each contribute to the FMN site. Residue 253–254 (NT) participates in substrate binding. FMN contacts are provided by residues Gly-275, Gly-304, and 325–326 (YT).

This sequence belongs to the dihydroorotate dehydrogenase family. Type 2 subfamily. Monomer. It depends on FMN as a cofactor.

The protein localises to the cell membrane. The catalysed reaction is (S)-dihydroorotate + a quinone = orotate + a quinol. It participates in pyrimidine metabolism; UMP biosynthesis via de novo pathway; orotate from (S)-dihydroorotate (quinone route): step 1/1. Catalyzes the conversion of dihydroorotate to orotate with quinone as electron acceptor. This is Dihydroorotate dehydrogenase (quinone) from Janthinobacterium sp. (strain Marseille) (Minibacterium massiliensis).